Reading from the N-terminus, the 372-residue chain is tRNA 2-selenouridine synthase (372 aa).

A Rhodanese domain is found at 17–140 (FLQDIPLIDV…LRNFLLTTLE (124 aa)). The S-selanylcysteine intermediate role is filled by Cys100.

It belongs to the SelU family. Monomer.

It catalyses the reaction 5-methylaminomethyl-2-thiouridine(34) in tRNA + selenophosphate + (2E)-geranyl diphosphate + H2O + H(+) = 5-methylaminomethyl-2-selenouridine(34) in tRNA + (2E)-thiogeraniol + phosphate + diphosphate. It carries out the reaction 5-methylaminomethyl-2-thiouridine(34) in tRNA + (2E)-geranyl diphosphate = 5-methylaminomethyl-S-(2E)-geranyl-thiouridine(34) in tRNA + diphosphate. The enzyme catalyses 5-methylaminomethyl-S-(2E)-geranyl-thiouridine(34) in tRNA + selenophosphate + H(+) = 5-methylaminomethyl-2-(Se-phospho)selenouridine(34) in tRNA + (2E)-thiogeraniol. The catalysed reaction is 5-methylaminomethyl-2-(Se-phospho)selenouridine(34) in tRNA + H2O = 5-methylaminomethyl-2-selenouridine(34) in tRNA + phosphate. Its function is as follows. Involved in the post-transcriptional modification of the uridine at the wobble position (U34) of tRNA(Lys), tRNA(Glu) and tRNA(Gln). Catalyzes the conversion of 2-thiouridine (S2U-RNA) to 2-selenouridine (Se2U-RNA). Acts in a two-step process involving geranylation of 2-thiouridine (S2U) to S-geranyl-2-thiouridine (geS2U) and subsequent selenation of the latter derivative to 2-selenouridine (Se2U) in the tRNA chain. This Serratia proteamaculans (strain 568) protein is tRNA 2-selenouridine synthase.